Here is a 353-residue protein sequence, read N- to C-terminus: Adenine deaminase (353 aa).

Residues H19, H21, and H208 each coordinate Zn(2+). E211 (proton donor) is an active-site residue. D289 contributes to the Zn(2+) binding site. D290 lines the substrate pocket.

Belongs to the metallo-dependent hydrolases superfamily. Adenosine and AMP deaminases family. Adenine deaminase type 2 subfamily. It depends on Zn(2+) as a cofactor.

It is found in the cytoplasm. Its subcellular location is the nucleus. The enzyme catalyses adenine + H2O + H(+) = hypoxanthine + NH4(+). Functionally, catalyzes the hydrolytic deamination of adenine to hypoxanthine. Plays an important role in the purine salvage pathway and in nitrogen catabolism. This chain is Adenine deaminase, found in Gibberella zeae (strain ATCC MYA-4620 / CBS 123657 / FGSC 9075 / NRRL 31084 / PH-1) (Wheat head blight fungus).